The chain runs to 321 residues: HPr kinase/phosphorylase (321 aa).

Catalysis depends on residues histidine 143 and lysine 164. ATP is bound at residue 158 to 165 (GKSGVGKS). Position 165 (serine 165) interacts with Mg(2+). Aspartate 182 functions as the Proton acceptor; for phosphorylation activity. Proton donor; for dephosphorylation activity in the catalytic mechanism. The segment at 206-215 (MEIRGLGILN) is important for the catalytic mechanism of both phosphorylation and dephosphorylation. Position 207 (glutamate 207) interacts with Mg(2+). Residue arginine 248 is part of the active site. The segment at 269–274 (PVRPGR) is important for the catalytic mechanism of dephosphorylation.

It belongs to the HPrK/P family. As to quaternary structure, homohexamer. Mg(2+) is required as a cofactor.

It catalyses the reaction [HPr protein]-L-serine + ATP = [HPr protein]-O-phospho-L-serine + ADP + H(+). The enzyme catalyses [HPr protein]-O-phospho-L-serine + phosphate + H(+) = [HPr protein]-L-serine + diphosphate. Catalyzes the ATP- as well as the pyrophosphate-dependent phosphorylation of a specific serine residue in HPr, a phosphocarrier protein of the phosphoenolpyruvate-dependent sugar phosphotransferase system (PTS). HprK/P also catalyzes the pyrophosphate-producing, inorganic phosphate-dependent dephosphorylation (phosphorolysis) of seryl-phosphorylated HPr (P-Ser-HPr). This Leptospira interrogans serogroup Icterohaemorrhagiae serovar copenhageni (strain Fiocruz L1-130) protein is HPr kinase/phosphorylase.